A 240-amino-acid chain; its full sequence is Ribosomal RNA small subunit methyltransferase G (240 aa).

Residues G80, F85, 103 to 105, 131 to 132, and R150 contribute to the S-adenosyl-L-methionine site; these read DSS and AE.

Belongs to the methyltransferase superfamily. RNA methyltransferase RsmG family.

Its subcellular location is the cytoplasm. Functionally, specifically methylates the N7 position of a guanine in 16S rRNA. This Thermoanaerobacter pseudethanolicus (strain ATCC 33223 / 39E) (Clostridium thermohydrosulfuricum) protein is Ribosomal RNA small subunit methyltransferase G.